Here is a 501-residue protein sequence, read N- to C-terminus: MTDTQNKNYIIALDQGTTSSRAIIFDRDANVVSTAQSEFVQHYPQAGWVEHDPMEIFATQTACMTKALAQADLHHNQIAAIGITNQRETTVIWERDTGRPIYNAIVWQCRRSTEICQQLKRDGLEEYIKDTTGLVIDPYFSGSKVKWILDNVEGSRERARKGELMFGTIDTWLIWKFTGGKVHVTDYTNASRTMLFNIHTLEWDQRMLDVLDIPREILPEVKASSEVYGHSKSGIPIAGIAGDQQAALFGQMCVEPGQAKNTYGTGCFLLMNTGKKAVKSAQGMLTTIGCGPRGEVAYALEGAVFNGGSTVQWLRDELKLINDALDTEYFASKVKDSNGVYLVPAFTGLGAPYWDPYARGALFGLTRGVKVDHIIRAALESIAYQTRDVLDAMQQDSGERLKSLRVDGGAVANNFLMQFQADILGTHVERPQMRETTALGAAFLAGLAIGFWSSLDELRNKAVIERVFEPSCEEAHREKLYAGWQKAVARTRDWEPHENEE.

Residue T17 coordinates ADP. 3 residues coordinate ATP: T17, T18, and S19. T17 serves as a coordination point for sn-glycerol 3-phosphate. R21 serves as a coordination point for ADP. Residues R87, E88, Y139, and D243 each contribute to the sn-glycerol 3-phosphate site. Residues R87, E88, Y139, D243, and Q244 each coordinate glycerol. The ADP site is built by T265 and G308. Residues T265, G308, Q312, and G409 each coordinate ATP. Residues G409 and N413 each contribute to the ADP site.

It belongs to the FGGY kinase family.

The enzyme catalyses glycerol + ATP = sn-glycerol 3-phosphate + ADP + H(+). Its pathway is polyol metabolism; glycerol degradation via glycerol kinase pathway; sn-glycerol 3-phosphate from glycerol: step 1/1. With respect to regulation, inhibited by fructose 1,6-bisphosphate (FBP). Key enzyme in the regulation of glycerol uptake and metabolism. Catalyzes the phosphorylation of glycerol to yield sn-glycerol 3-phosphate. The protein is Glycerol kinase of Pseudomonas savastanoi pv. phaseolicola (strain 1448A / Race 6) (Pseudomonas syringae pv. phaseolicola (strain 1448A / Race 6)).